Consider the following 374-residue polypeptide: 3-dehydroquinate synthase (374 aa).

This sequence belongs to the archaeal-type DHQ synthase family.

The catalysed reaction is 2-amino-2,3,7-trideoxy-D-lyxo-hept-6-ulosonate + NAD(+) + H2O = 3-dehydroquinate + NH4(+) + NADH + H(+). Functionally, catalyzes the oxidative deamination and cyclization of 2-amino-3,7-dideoxy-D-threo-hept-6-ulosonic acid (ADH) to yield 3-dehydroquinate (DHQ), which is fed into the canonical shikimic pathway of aromatic amino acid biosynthesis. This chain is 3-dehydroquinate synthase, found in Methanothermobacter thermautotrophicus (strain ATCC 29096 / DSM 1053 / JCM 10044 / NBRC 100330 / Delta H) (Methanobacterium thermoautotrophicum).